The following is a 284-amino-acid chain: NADPH-dependent 7-cyano-7-deazaguanine reductase (284 aa).

Residue 91–93 (IES) coordinates substrate. Residue 93 to 94 (SK) coordinates NADPH. Cys192 serves as the catalytic Thioimide intermediate. The active-site Proton donor is the Asp199. A substrate-binding site is contributed by 231–232 (HE). Residue 260–261 (RG) participates in NADPH binding.

It belongs to the GTP cyclohydrolase I family. QueF type 2 subfamily. In terms of assembly, homodimer.

It localises to the cytoplasm. It carries out the reaction 7-aminomethyl-7-carbaguanine + 2 NADP(+) = 7-cyano-7-deazaguanine + 2 NADPH + 3 H(+). Its pathway is tRNA modification; tRNA-queuosine biosynthesis. In terms of biological role, catalyzes the NADPH-dependent reduction of 7-cyano-7-deazaguanine (preQ0) to 7-aminomethyl-7-deazaguanine (preQ1). In Shewanella denitrificans (strain OS217 / ATCC BAA-1090 / DSM 15013), this protein is NADPH-dependent 7-cyano-7-deazaguanine reductase.